We begin with the raw amino-acid sequence, 1454 residues long: MAGEITPSGSRRSWLSSGAASLARSLRDGDDPFRRSAAASRRDAGDDEENLRWAALEKLPTYDRMRRGILRKAVDGGGDGEGAGSLFKADEVDIANLDPREGRELMERVFKAVEDDNERFLRRFRDRLDQVGIELPKIEVRYQHLDIEADVHVGKRALPTLLNATINTLEGLVSLFISSNKRKLKILNDVNGIIKPSRMTLLLGPPSSGKSTLMRALTGKPDKNLKVSGEITYCGHTFKEFYPERTSAYVSQHDLHNPEMTVRETLDFSRRCLGSGARYDMLSELTRRERNAGIKPDPEIDALMKATVVEGKQNNIVTDLVLKALGLDICADTIVGGAMIRGISGGQKKRVTTGEMLTGPATALFMDEISTGLDSSSTFQIVKYIRQVTHVMNATVMMSLLQPPPETYALFDDIVLIAEGYIVYHGPRENILEFFESAGFRCPERKGVADFLQEVTSRKDQQQYWFLEQDHYRYVSVEEFAQNFKKFHVGQKLQKELQVPYDKSKTHPAALTTKKYGLSSLESLKAVMSREWLLMKRNSFLFIFKAFQLFVLGFITMTLFLRTKMPHEKFSDTSKYVGALTASLITIMFNGFGELQLTIDKLPIFYKQRDFLFFPAWTYGLANIILKVPLSLMESSLWIVLTYYVVGFAPAAGRFFKQFLAYFWTHQMALALFRLLGAILRSMVVANTFGMFVLLLIFLFGGFLVSRKDIKPWWIWGYWTSPMMYSNNALSVNEFLASRWAIPNNDSSISAPTIGKAFLQSKGYFTGEWGYWLSIGAMIGFMIVFNILYLCALTFLRPIGSASTVVSDDDTKSELEAESNQEQMSEVINGTNGTENRRSQRGMVLPFQPLSLSFNHMNYYVDMPAEMKAQGFTESRLQLLSDISGAFRPGVLTALVGVSGAGKTTLMDVLAGRKTSGTIEGDIKLSGYPKKQETFARISGYCEQTDIHSPNLTVYESIVYSAWLRLSSEVDKNTRKVFVEEVMSLVELDVLRDALVGLPGVSGLSTEQRKRLTIAVELVANPSIIFMDEPTSGLDARAAAIVMRTVRNTVNTGRTVVCTIHQPSIDIFESFDELLLLKRGGRVIYAGQLGLHSQILVEYFEAIPGVPKITEGYNPATWMLEVSSSLAEARLDIDFAEVYANSALYRSNQELIKQLSVPPPGFQDLSFPTKYSQNFLNQCVANTWKQFQSYWKDPPYNAMRYVMTLLYGLVFGTVFWRRGKNIESVNDLNNLLGATYAAVFFLGAANLLTLLPVVSVERTVFYREKAAGMYSPLSYAFAQGFVEFCYSAVQGVLYTILIYSMIGYEWKADKFFYFLFFMIAAFAYFTLFSMMLVACTASEMLAAVLVSFVLSSWNNFAGFIIPRPLIPVWWRWFYWANPVSWTIYGVIASQFADSDRVVTVPGQSTTMVVKDFLEKNMGFKHDFLGYVVLAHFGYVIIFFFLFGYGIKCLNFQKR.

The segment at 23–47 (ARSLRDGDDPFRRSAAASRRDAGDD) is disordered. Residues 25-44 (SLRDGDDPFRRSAAASRRDA) show a composition bias toward basic and acidic residues. N163 carries N-linked (GlcNAc...) asparagine glycosylation. The 275-residue stretch at 170–444 (EGLVSLFISS…FESAGFRCPE (275 aa)) folds into the ABC transporter 1 domain. 204–211 (GPPSSGKS) lines the ATP pocket. N393 is a glycosylation site (N-linked (GlcNAc...) asparagine). The region spanning 524-735 (LKAVMSREWL…SNNALSVNEF (212 aa)) is the ABC transmembrane type-2 1 domain. 6 helical membrane-spanning segments follow: residues 540 to 560 (FLFI…MTLF), 577 to 597 (VGAL…ELQL), 613 to 630 (FFPA…KVPL), 637 to 656 (LWIV…GRFF), 659 to 679 (FLAY…LGAI), and 684 to 704 (VVAN…GGFL). An N-linked (GlcNAc...) asparagine glycan is attached at N745. A helical membrane pass occupies residues 775–795 (IGAMIGFMIVFNILYLCALTF). The interval 804–823 (TVVSDDDTKSELEAESNQEQ) is disordered. Residues N829 and N832 are each glycosylated (N-linked (GlcNAc...) asparagine). An ABC transporter 2 domain is found at 852–1104 (LSFNHMNYYV…ILVEYFEAIP (253 aa)). 897-904 (GVSGAGKT) is a binding site for ATP. An N-linked (GlcNAc...) asparagine glycan is attached at N951. The region spanning 1178-1391 (QCVANTWKQF…TIYGVIASQF (214 aa)) is the ABC transmembrane type-2 2 domain. Helical transmembrane passes span 1196-1216 (YNAM…TVFW), 1236-1256 (YAAV…VVSV), 1284-1304 (FCYS…MIGY), 1314-1334 (FLFF…MLVA), 1341-1361 (LAAV…GFII), 1372-1392 (WFYW…SQFA), and 1423-1443 (FLGY…FLFG).

It belongs to the ABC transporter superfamily. ABCG family. PDR (TC 3.A.1.205) subfamily. Specifically expressed in the vasculature of roots, stems, panicles, sheaths and leaves.

The protein localises to the cell membrane. ABC transporter modulating cadmium (Cd) import, thus controlling Cd(2+) accumulation to prevent phytotoxicity. Confers high tolerance to Cd in yeast. Prevents leaf bacteria proliferation, such as Xanthomonas oryzae pv. oryzicola (Xoc) RS105 and X.oryzae pv. oryzae (Xoo) PXO99, by triggering Cd accumulation, which in turn impairs bacterial virulence factors. This is ABC transporter G family member 43 from Oryza sativa subsp. japonica (Rice).